Consider the following 421-residue polypeptide: 3-oxoacyl-[acyl-carrier-protein] synthase 2 (421 aa).

In terms of domain architecture, Ketosynthase family 3 (KS3) spans 1 to 417 (MRRVVITGTG…GTNASLILRR (417 aa)). Active-site for beta-ketoacyl synthase activity residues include cysteine 170, histidine 311, and histidine 347.

This sequence belongs to the thiolase-like superfamily. Beta-ketoacyl-ACP synthases family. In terms of assembly, homodimer.

The enzyme catalyses a fatty acyl-[ACP] + malonyl-[ACP] + H(+) = a 3-oxoacyl-[ACP] + holo-[ACP] + CO2. The catalysed reaction is (9Z)-hexadecenoyl-[ACP] + malonyl-[ACP] + H(+) = 3-oxo-(11Z)-octadecenoyl-[ACP] + holo-[ACP] + CO2. It participates in lipid metabolism; fatty acid biosynthesis. Its function is as follows. Involved in the type II fatty acid elongation cycle. Catalyzes the elongation of a wide range of acyl-ACP by the addition of two carbons from malonyl-ACP to an acyl acceptor. Can efficiently catalyze the conversion of palmitoleoyl-ACP (cis-hexadec-9-enoyl-ACP) to cis-vaccenoyl-ACP (cis-octadec-11-enoyl-ACP), an essential step in the thermal regulation of fatty acid composition. The sequence is that of 3-oxoacyl-[acyl-carrier-protein] synthase 2 (fabF) from Rhizobium meliloti (strain 1021) (Ensifer meliloti).